A 185-amino-acid chain; its full sequence is Elongation factor P (185 aa).

It belongs to the elongation factor P family.

Its subcellular location is the cytoplasm. The protein operates within protein biosynthesis; polypeptide chain elongation. Involved in peptide bond synthesis. Stimulates efficient translation and peptide-bond synthesis on native or reconstituted 70S ribosomes in vitro. Probably functions indirectly by altering the affinity of the ribosome for aminoacyl-tRNA, thus increasing their reactivity as acceptors for peptidyl transferase. This chain is Elongation factor P (efp), found in Thermotoga maritima (strain ATCC 43589 / DSM 3109 / JCM 10099 / NBRC 100826 / MSB8).